The following is a 314-amino-acid chain: MRQDLTGTPRFFRLTQGYPGRAHSAVNTLHRSVLLEETIVGLQVHPGGLYLDATVGLGGHSEAILRTESTRVVALDQDEDALAQARLRLAPFGERVRFEHINFAEFEPGEERFDGIVADLGVSSMQLDSPERGFSWRFESPLDMRMDGGGEAETAADLVNTCSAEQLSDLFWRYGEERFSRRIARRIVERRPLRTTTELAAVVASAIPTRQPIHPATRVFQALRIAVNGEVAALETFLERSPDWLVPGGRLAVISFHSLEDRPVKHRWRADPRLEVLTRKTITAGEAEIQSNPRARSARLRLARRLSPSEESRS.

S-adenosyl-L-methionine is bound by residues 58 to 60 (GGH), aspartate 76, phenylalanine 103, aspartate 119, and glutamine 126.

It belongs to the methyltransferase superfamily. RsmH family.

The protein localises to the cytoplasm. The catalysed reaction is cytidine(1402) in 16S rRNA + S-adenosyl-L-methionine = N(4)-methylcytidine(1402) in 16S rRNA + S-adenosyl-L-homocysteine + H(+). Functionally, specifically methylates the N4 position of cytidine in position 1402 (C1402) of 16S rRNA. The polypeptide is Ribosomal RNA small subunit methyltransferase H (Gloeobacter violaceus (strain ATCC 29082 / PCC 7421)).